Reading from the N-terminus, the 279-residue chain is Thymidylate synthase (279 aa).

Residue 133 to 134 participates in dUMP binding; sequence RR. Cys154 acts as the Nucleophile in catalysis. DUMP contacts are provided by residues 178 to 181, Asn189, and 219 to 221; these read RSND and HIY. Asp181 contacts (6R)-5,10-methylene-5,6,7,8-tetrahydrofolate. Ala278 lines the (6R)-5,10-methylene-5,6,7,8-tetrahydrofolate pocket.

This sequence belongs to the thymidylate synthase family. Bacterial-type ThyA subfamily. In terms of assembly, homodimer.

The protein resides in the cytoplasm. The catalysed reaction is dUMP + (6R)-5,10-methylene-5,6,7,8-tetrahydrofolate = 7,8-dihydrofolate + dTMP. It participates in pyrimidine metabolism; dTTP biosynthesis. Catalyzes the reductive methylation of 2'-deoxyuridine-5'-monophosphate (dUMP) to 2'-deoxythymidine-5'-monophosphate (dTMP) while utilizing 5,10-methylenetetrahydrofolate (mTHF) as the methyl donor and reductant in the reaction, yielding dihydrofolate (DHF) as a by-product. This enzymatic reaction provides an intracellular de novo source of dTMP, an essential precursor for DNA biosynthesis. This is Thymidylate synthase from Streptococcus pyogenes serotype M12 (strain MGAS2096).